Reading from the N-terminus, the 198-residue chain is Glycerol-3-phosphate acyltransferase (198 aa).

6 helical membrane-spanning segments follow: residues 1–21 (MHIL…GFLF), 50–70 (WPAF…VKIA), 77–97 (NLFE…PIWL), 111–131 (MFIA…LIIL), 136–156 (IVSL…FLDI), and 157–177 (GSTN…VIWK).

The protein belongs to the PlsY family. As to quaternary structure, probably interacts with PlsX.

The protein localises to the cell inner membrane. It carries out the reaction an acyl phosphate + sn-glycerol 3-phosphate = a 1-acyl-sn-glycero-3-phosphate + phosphate. Its pathway is lipid metabolism; phospholipid metabolism. Its function is as follows. Catalyzes the transfer of an acyl group from acyl-phosphate (acyl-PO(4)) to glycerol-3-phosphate (G3P) to form lysophosphatidic acid (LPA). This enzyme utilizes acyl-phosphate as fatty acyl donor, but not acyl-CoA or acyl-ACP. In Prochlorococcus marinus subsp. pastoris (strain CCMP1986 / NIES-2087 / MED4), this protein is Glycerol-3-phosphate acyltransferase.